Here is a 204-residue protein sequence, read N- to C-terminus: MAAARPALGRVLPGSSMLFLCDMQEKFRHVVYFRQIVSMAARMLKVARLLSVPTVLTEQYPQGLGPTVPELGAQGLQPYSKTCFSMVPAVQQELDARPQLRSVLLCGVETQACILQTALDLLDRGLQVHVVVDACTSRSQVDRLVALSRLRQSGAFLSTSEGLIFQLVGDATHPQFKEIQKLVKEPSPDSGLLGLFQDQNPLFR.

Belongs to the isochorismatase family. Interacts with CDKN2A.

The protein resides in the cytoplasm. It localises to the nucleus. This is Isochorismatase domain-containing protein 2 (ISOC2) from Bos taurus (Bovine).